Consider the following 239-residue polypeptide: 1-(5-phosphoribosyl)-5-[(5-phosphoribosylamino)methylideneamino] imidazole-4-carboxamide isomerase (239 aa).

Asp-12 (proton acceptor) is an active-site residue. The active-site Proton donor is the Asp-132.

This sequence belongs to the HisA/HisF family.

The protein resides in the cytoplasm. It catalyses the reaction 1-(5-phospho-beta-D-ribosyl)-5-[(5-phospho-beta-D-ribosylamino)methylideneamino]imidazole-4-carboxamide = 5-[(5-phospho-1-deoxy-D-ribulos-1-ylimino)methylamino]-1-(5-phospho-beta-D-ribosyl)imidazole-4-carboxamide. It participates in amino-acid biosynthesis; L-histidine biosynthesis; L-histidine from 5-phospho-alpha-D-ribose 1-diphosphate: step 4/9. This Natronomonas pharaonis (strain ATCC 35678 / DSM 2160 / CIP 103997 / JCM 8858 / NBRC 14720 / NCIMB 2260 / Gabara) (Halobacterium pharaonis) protein is 1-(5-phosphoribosyl)-5-[(5-phosphoribosylamino)methylideneamino] imidazole-4-carboxamide isomerase.